The primary structure comprises 282 residues: Undecaprenyl-diphosphatase (282 aa).

The next 8 membrane-spanning stretches (helical) occupy residues 2 to 22 (FDFI…FLPV), 47 to 67 (FTAV…IQLY), 90 to 110 (WIKV…LNNF), 115 to 135 (LLNP…FIVI), 152 to 172 (ITFK…VPGT), 190 to 210 (FVAA…VTIL), 225 to 245 (AQLF…LFAI), and 259 to 279 (IFGW…IAGL).

The protein belongs to the UppP family.

It is found in the cell membrane. It carries out the reaction di-trans,octa-cis-undecaprenyl diphosphate + H2O = di-trans,octa-cis-undecaprenyl phosphate + phosphate + H(+). Catalyzes the dephosphorylation of undecaprenyl diphosphate (UPP). Confers resistance to bacitracin. In Leuconostoc citreum (strain KM20), this protein is Undecaprenyl-diphosphatase.